The chain runs to 163 residues: Lipoprotein signal peptidase (163 aa).

Transmembrane regions (helical) follow at residues 9-29 (AWPWLWFSVLVILLDQLSKYL), 42-62 (ILPFLNFTLNYNTGAAFSFLG), 67-87 (WQIIFFAAISFVVSIFLILWL), and 93-113 (SEIMMSLGLSLIIGGALGNFI). Residues Asp-123 and Asp-141 contribute to the active site. A helical transmembrane segment spans residues 137 to 157 (FNVADSAICVGVFLLIVHMLL).

The protein belongs to the peptidase A8 family.

The protein localises to the cell inner membrane. The enzyme catalyses Release of signal peptides from bacterial membrane prolipoproteins. Hydrolyzes -Xaa-Yaa-Zaa-|-(S,diacylglyceryl)Cys-, in which Xaa is hydrophobic (preferably Leu), and Yaa (Ala or Ser) and Zaa (Gly or Ala) have small, neutral side chains.. It functions in the pathway protein modification; lipoprotein biosynthesis (signal peptide cleavage). In terms of biological role, this protein specifically catalyzes the removal of signal peptides from prolipoproteins. The protein is Lipoprotein signal peptidase of Coxiella burnetii (strain RSA 331 / Henzerling II).